The sequence spans 269 residues: 3-methyl-2-oxobutanoate hydroxymethyltransferase (269 aa).

Positions 51 and 90 each coordinate Mg(2+). Residues Asp-51 to Ser-52, Asp-90, and Lys-120 each bind 3-methyl-2-oxobutanoate. Glu-122 contacts Mg(2+). The active-site Proton acceptor is Glu-187.

It belongs to the PanB family. As to quaternary structure, homodecamer; pentamer of dimers. The cofactor is Mg(2+).

It localises to the cytoplasm. The catalysed reaction is 3-methyl-2-oxobutanoate + (6R)-5,10-methylene-5,6,7,8-tetrahydrofolate + H2O = 2-dehydropantoate + (6S)-5,6,7,8-tetrahydrofolate. Its pathway is cofactor biosynthesis; (R)-pantothenate biosynthesis; (R)-pantoate from 3-methyl-2-oxobutanoate: step 1/2. Its function is as follows. Catalyzes the reversible reaction in which hydroxymethyl group from 5,10-methylenetetrahydrofolate is transferred onto alpha-ketoisovalerate to form ketopantoate. This Tropheryma whipplei (strain TW08/27) (Whipple's bacillus) protein is 3-methyl-2-oxobutanoate hydroxymethyltransferase.